Here is a 720-residue protein sequence, read N- to C-terminus: Viral guanylyltransferase VP3 (720 aa).

It localises to the virion. The catalysed reaction is a 5'-end diphospho-ribonucleoside in mRNA + GTP + H(+) = a 5'-end (5'-triphosphoguanosine)-ribonucleoside in mRNA + diphosphate. The enzyme catalyses a 5'-end (5'-triphosphoguanosine)-ribonucleoside in mRNA + S-adenosyl-L-methionine = a 5'-end (N(7)-methyl 5'-triphosphoguanosine)-ribonucleoside in mRNA + S-adenosyl-L-homocysteine. Outer capsid protein involved in mRNA capping. Catalyzes the last 3 enzymatic activities for formation of the 5' cap structure on the viral plus-strand transcripts, namely the RNA guanylyltransferase, RNA-7N- and RNA-2'O-methyltransferase activities. This chain is Viral guanylyltransferase VP3 (Segment-3), found in Banna virus (BAV).